The following is a 61-amino-acid chain: Conotoxin Tx-D021 (61 aa).

The N-terminal stretch at Met1 to Ala22 is a signal peptide. Residues Arg23–Asp48 constitute a propeptide that is removed on maturation. Position 60 is a cysteine amide (Cys60).

The protein belongs to the conotoxin T superfamily. In terms of processing, contains 2 disulfide bonds that can be either 'C1-C3, C2-C4' or 'C1-C4, C2-C3', since these disulfide connectivities have been observed for conotoxins with cysteine framework V (for examples, see AC P0DQQ7 and AC P81755). Expressed by the venom duct.

It is found in the secreted. This chain is Conotoxin Tx-D021, found in Conus textile (Cloth-of-gold cone).